We begin with the raw amino-acid sequence, 256 residues long: Cell division protein FtsQ (256 aa).

Over 1–23 (MIKAVKMNTSFDKEKVRKHLPGA) the chain is Cytoplasmic. The chain crosses the membrane as a helical span at residues 24 to 44 (IFLSLVVITSLWLVISTISWM). The Periplasmic portion of the chain corresponds to 45 to 256 (TDEDRLPLSH…SDDVENKEEN (212 aa)). One can recognise a POTRA domain in the interval 50-120 (LPLSHMIIQG…ETIKVFVVEH (71 aa)).

Belongs to the FtsQ/DivIB family. FtsQ subfamily. Part of a complex composed of FtsB, FtsL and FtsQ.

It localises to the cell inner membrane. Essential cell division protein. May link together the upstream cell division proteins, which are predominantly cytoplasmic, with the downstream cell division proteins, which are predominantly periplasmic. May control correct divisome assembly. This Aliivibrio fischeri (strain ATCC 700601 / ES114) (Vibrio fischeri) protein is Cell division protein FtsQ.